The following is a 630-amino-acid chain: Amino acid transporter heavy chain SLC3A2 (630 aa).

An N-acetylmethionine modification is found at Met-1. At Glu-2 the chain carries N-acetylserine. Glu-2 bears the Phosphoserine mark. A disordered region spans residues 15–39; that stretch reads IPRQLPGSHSEAGVQGLSAGDDSEL. The Cytoplasmic portion of the chain corresponds to 102–184; the sequence is MSQDTEVDMK…SPGWVRTRWA (83 aa). A Phosphoserine modification is found at Ser-103. Position 106 is a phosphothreonine (Thr-106). At Ser-134 the chain carries Phosphoserine. Lys-147 participates in a covalent cross-link: Glycyl lysine isopeptide (Lys-Gly) (interchain with G-Cter in ubiquitin). Ser-165 carries the post-translational modification Phosphoserine. Lys-166 participates in a covalent cross-link: Glycyl lysine isopeptide (Lys-Gly) (interchain with G-Cter in SUMO2). A helical; Signal-anchor for type II membrane protein transmembrane segment spans residues 185-205; the sequence is LLLLFWLGWLGMLAGAVVIIV. The Extracellular segment spans residues 206 to 630; the sequence is RAPRCRELPA…GLLLRFPYAA (425 aa). 2 N-linked (GlcNAc...) asparagine glycosylation sites follow: Asn-365 and Asn-381. Residues Ser-406, Ser-408, and Ser-410 each carry the phosphoserine modification. The N-linked (GlcNAc...) (complex) asparagine glycan is linked to Asn-424. An N-linked (GlcNAc...) asparagine glycan is attached at Asn-506. 2 positions are modified to phosphoserine: Ser-527 and Ser-531.

Disulfide-linked heterodimer with a non-glycosylated catalytic light subunit (SLC7A5, SLC7A6, SLC7A7, SLC7A8, SLC7A10 or SLC7A11). Interacts with TLCD3A/CT120. Interacts with ICAM1. Constitutively and specifically associates with beta-1 integrins (alpha-2/beta-1, alpha-3/beta-1, alpha-5/beta-1 and alpha-6/beta-1), but minimally with alpha-4/beta-1. Interacts with LAPTM4B; recruits SLC3A2 and SLC7A5/LAT1 to lysosomes to promote leucine uptake into these organelles and is required for mTORC1 activation. As to quaternary structure, (Microbial infection) Interacts with hepatitis C virus/HCV envelope glycoprotein E2; the interaction may facilitate viral entry into host cell. In terms of processing, N-glycosylated; N-glycosylation is crucial for trafficking and stability of SLC3A2 to the plasma membrane. Phosphorylation on Ser-406; Ser-408 or Ser-410 and on Ser-527 or Ser-531 by ecto-protein kinases favors heterotypic cell-cell interactions. Expressed ubiquitously in all tissues tested with highest levels detected in kidney, placenta and testis and weakest level in thymus. During gestation, expression in the placenta was significantly stronger at full-term than at the mid-trimester stage. Expressed in HUVECS and at low levels in resting peripheral blood T-lymphocytes and quiescent fibroblasts. Also expressed in fetal liver and in the astrocytic process of primary astrocytic gliomas. Expressed in retinal endothelial cells and in the intestinal epithelial cell line C2BBe1.

Its subcellular location is the apical cell membrane. The protein resides in the cell membrane. It is found in the cell junction. The protein localises to the lysosome membrane. It localises to the melanosome. Its subcellular location is the basolateral cell membrane. In terms of biological role, acts as a chaperone that facilitates biogenesis and trafficking of functional transporters heterodimers to the plasma membrane. Forms heterodimer with SLC7 family transporters (SLC7A5, SLC7A6, SLC7A7, SLC7A8, SLC7A10 and SLC7A11), a group of amino-acid antiporters. Heterodimers function as amino acids exchangers, the specificity of the substrate depending on the SLC7A subunit. Heterodimers SLC3A2/SLC7A6 or SLC3A2/SLC7A7 mediate the uptake of dibasic amino acids. Heterodimer SLC3A2/SLC7A11 functions as an antiporter by mediating the exchange of extracellular anionic L-cystine and intracellular L-glutamate across the cellular plasma membrane. SLC3A2/SLC7A10 translocates small neutral L- and D-amino acids across the plasma membrane. SLC3A2/SLC75 or SLC3A2/SLC7A8 translocates neutral amino acids with broad specificity, thyroid hormones and L-DOPA. SLC3A2 is essential for plasma membrane localization, stability, and the transport activity of SLC7A5 and SLC7A8. When associated with LAPTM4B, the heterodimer SLC7A5 is recruited to lysosomes to promote leucine uptake into these organelles, and thereby mediates mTORC1 activation. Modulates integrin-related signaling and is essential for integrin-dependent cell spreading, migration and tumor progression. Functionally, (Microbial infection) In case of hepatitis C virus/HCV infection, the complex formed by SLC3A2 and SLC7A5/LAT1 plays a role in HCV propagation by facilitating viral entry into host cell and increasing L-leucine uptake-mediated mTORC1 signaling activation, thereby contributing to HCV-mediated pathogenesis. (Microbial infection) Acts as a receptor for malaria parasite Plasmodium vivax (Thai isolate) in immature red blood cells. This is Amino acid transporter heavy chain SLC3A2 from Homo sapiens (Human).